The following is a 215-amino-acid chain: Probable transaldolase (215 aa).

Lys-83 acts as the Schiff-base intermediate with substrate in catalysis.

Belongs to the transaldolase family. Type 3B subfamily.

It localises to the cytoplasm. It catalyses the reaction D-sedoheptulose 7-phosphate + D-glyceraldehyde 3-phosphate = D-erythrose 4-phosphate + beta-D-fructose 6-phosphate. The protein operates within carbohydrate degradation; pentose phosphate pathway; D-glyceraldehyde 3-phosphate and beta-D-fructose 6-phosphate from D-ribose 5-phosphate and D-xylulose 5-phosphate (non-oxidative stage): step 2/3. Transaldolase is important for the balance of metabolites in the pentose-phosphate pathway. This is Probable transaldolase from Methanococcus maripaludis (strain C5 / ATCC BAA-1333).